The primary structure comprises 72 residues: Aurein-2.3 (72 aa).

The N-terminal stretch at 1 to 22 (MAFLKKSLFLVLFLGLVSLSIC) is a signal peptide. Positions 23-49 (EKEKRQNGEDEDENEAANHEEGSEEKR) are excised as a propeptide. A disordered region spans residues 27–47 (RQNGEDEDENEAANHEEGSEE). Over residues 38-47 (AANHEEGSEE) the composition is skewed to basic and acidic residues. Leu65 is subject to Leucine amide. Positions 69–72 (NDVE) are excised as a propeptide.

Amidation is essential for antibacterial activity against Gram-positive bacteria. As to expression, expressed by the skin dorsal glands.

Its subcellular location is the secreted. The protein localises to the target cell membrane. In terms of biological role, amphipathic alpha-helical antimicrobial peptide with weak to moderate activity against Gram-positive bacteria, and no activity against Gram-negative bacteria. Probably acts by disturbing membrane functions with its amphipathic structure. Strongly inhibits the formation of NO by neuronal nitric oxide synthase (nNOS) at micromolar concentrations. Acts by a non-competitive mechanism, probably by binding to calcium/calmodulin and as a consequence blocking calmodulin attachment to nNOS. The polypeptide is Aurein-2.3 (Ranoidea aurea (Green and golden bell frog)).